Consider the following 509-residue polypeptide: Putative (R)-citramalate synthase CimA (509 aa).

In terms of domain architecture, Pyruvate carboxyltransferase spans 14 to 267 (VRIFDTTLRD…DTGIRTERLT (254 aa)).

This sequence belongs to the alpha-IPM synthase/homocitrate synthase family. Homodimer.

It carries out the reaction pyruvate + acetyl-CoA + H2O = (3R)-citramalate + CoA + H(+). Its pathway is amino-acid biosynthesis; L-isoleucine biosynthesis; 2-oxobutanoate from pyruvate: step 1/3. Its function is as follows. Catalyzes the condensation of pyruvate and acetyl-coenzyme A to form (R)-citramalate. This chain is Putative (R)-citramalate synthase CimA (cimA), found in Methanopyrus kandleri (strain AV19 / DSM 6324 / JCM 9639 / NBRC 100938).